Here is a 282-residue protein sequence, read N- to C-terminus: uncharacterized protein (282 aa).

The region spanning 1–77 (MNGLLRIRQR…LALSEALASQ (77 aa)) is the HTH rpiR-type domain. The segment at residues 37–56 (SQQLANEAGVSQSSVVKFAQ) is a DNA-binding region (H-T-H motif). Residues 125–265 (CVTMLRSARR…FIALIQQDLE (141 aa)) form the SIS domain.

This is an uncharacterized protein from Escherichia coli (strain K12).